A 433-amino-acid chain; its full sequence is E1B 55 kDa protein (433 aa).

The protein belongs to the adenoviridae E1B 55 kDa protein family. As to quaternary structure, interacts with host PML-4 and PML-5; this interaction promotes efficient subnuclear targeting of E1B-55K to PML nuclear bodies. Interacts with E4-ORF3 protein. Interacts with E4-ORF6 protein.

The protein localises to the host nucleus. Its subcellular location is the host cytoplasm. Its function is as follows. Plays a major role to prevent cellular inhibition of viral genome replication. Assembles an SCF-like E3 ubiquitin ligase complex based on the cellular proteins ELOB, ELOC, CUL5 and RBX1, in cooperation with viral E4orf6. This viral RING-type ligase ubiquitinates cellular substrates and targets them to proteasomal degradation: TP53/p53, LIG4, MRE11-RAD50-NBS1 (MRN) complex, ITGA3, DAXX and BLM. E1B-55K probably acts as the substrate-specific adapter of the SCF-like E3 ubiquitin ligase complex. Degradation of host TP53/p53 activity is essential for preventing E1A-induced TP53 accumulation that would otherwise lead to cell apoptosis and growth arrest. E1B-55K also inactivates TP53 transcription-factor activity by binding its transactivation domain. E1B-55K also functions as a SUMO1 E3 ligase for TP53 which causes the latter to be sequestered in promyelocytic leukemia (PML) nuclear bodies thereby contributing to maximal inhibition of TP53 function. The polypeptide is E1B 55 kDa protein (Murine adenovirus A serotype 1 (MAdV-1)).